The chain runs to 285 residues: Glutamate racemase (285 aa).

Substrate is bound by residues 28-29 and 60-61; these read DS and YG. Catalysis depends on Cys92, which acts as the Proton donor/acceptor. Residue 93 to 94 participates in substrate binding; the sequence is NT. The active-site Proton donor/acceptor is the Cys204. Residue 205–206 participates in substrate binding; that stretch reads TH.

It belongs to the aspartate/glutamate racemases family.

It catalyses the reaction L-glutamate = D-glutamate. Its pathway is cell wall biogenesis; peptidoglycan biosynthesis. Functionally, provides the (R)-glutamate required for cell wall biosynthesis. This Escherichia coli O6:H1 (strain CFT073 / ATCC 700928 / UPEC) protein is Glutamate racemase.